Reading from the N-terminus, the 335-residue chain is Glyceraldehyde-3-phosphate dehydrogenase (335 aa).

NAD(+) contacts are provided by residues 12–13 (RI), aspartate 34, and lysine 79. D-glyceraldehyde 3-phosphate contacts are provided by residues 150–152 (SCT), threonine 181, 210–211 (TG), and arginine 233. Cysteine 151 serves as the catalytic Nucleophile. Asparagine 315 contacts NAD(+).

It belongs to the glyceraldehyde-3-phosphate dehydrogenase family. In terms of assembly, homotetramer.

Its subcellular location is the cytoplasm. The catalysed reaction is D-glyceraldehyde 3-phosphate + phosphate + NAD(+) = (2R)-3-phospho-glyceroyl phosphate + NADH + H(+). It participates in carbohydrate degradation; glycolysis; pyruvate from D-glyceraldehyde 3-phosphate: step 1/5. The polypeptide is Glyceraldehyde-3-phosphate dehydrogenase (GPD) (Debaryomyces hansenii (strain ATCC 36239 / CBS 767 / BCRC 21394 / JCM 1990 / NBRC 0083 / IGC 2968) (Yeast)).